We begin with the raw amino-acid sequence, 311 residues long: GTP cyclohydrolase FolE2 (311 aa).

This sequence belongs to the GTP cyclohydrolase IV family.

The catalysed reaction is GTP + H2O = 7,8-dihydroneopterin 3'-triphosphate + formate + H(+). It functions in the pathway cofactor biosynthesis; 7,8-dihydroneopterin triphosphate biosynthesis; 7,8-dihydroneopterin triphosphate from GTP: step 1/1. Its function is as follows. Converts GTP to 7,8-dihydroneopterin triphosphate. The polypeptide is GTP cyclohydrolase FolE2 (Xanthomonas campestris pv. campestris (strain 8004)).